We begin with the raw amino-acid sequence, 571 residues long: Sporulation-specific protein 1 (571 aa).

3 disordered regions span residues methionine 1 to valine 53, methionine 67 to glutamine 133, and lysine 482 to glutamate 501. The segment covering serine 23 to arginine 37 has biased composition (basic residues). 3 stretches are compositionally biased toward polar residues: residues methionine 67–phenylalanine 86, proline 95–lysine 121, and asparagine 486–glutamine 499. Coiled coils occupy residues aspartate 469 to asparagine 486 and glutamate 542 to valine 566.

In terms of assembly, interacts directly with ADY3. Probable component of a spindle pole body (SPB) complex composed of ADY3, SSP1, DON1, MPC54, SPO21/MPC70, NUD1 and CNM67. Phosphorylated.

It is found in the prospore membrane. Its function is as follows. Involved in the pathway that organizes the shaping and sizing of the prospore membrane (PSM) during sporulation. May be required for the formation of ADY3 and DON1-containing protein coats at the leading edge of the PSMs during meiosis II. The polypeptide is Sporulation-specific protein 1 (SSP1) (Saccharomyces cerevisiae (strain ATCC 204508 / S288c) (Baker's yeast)).